The sequence spans 202 residues: N-(5'-phosphoribosyl)anthranilate isomerase (202 aa).

This sequence belongs to the TrpF family.

It carries out the reaction N-(5-phospho-beta-D-ribosyl)anthranilate = 1-(2-carboxyphenylamino)-1-deoxy-D-ribulose 5-phosphate. It functions in the pathway amino-acid biosynthesis; L-tryptophan biosynthesis; L-tryptophan from chorismate: step 3/5. This chain is N-(5'-phosphoribosyl)anthranilate isomerase, found in Geobacter metallireducens (strain ATCC 53774 / DSM 7210 / GS-15).